The sequence spans 340 residues: Ketol-acid reductoisomerase (NADP(+)) (340 aa).

The region spanning 3-182 (VQMEYEKDVK…GAARVGLLET (180 aa)) is the KARI N-terminal Rossmann domain. NADP(+) is bound by residues 26-29 (YGSQ), Arg-49, Ser-53, and 83-86 (DEIQ). Residue His-108 is part of the active site. An NADP(+)-binding site is contributed by Gly-134. The region spanning 183–328 (TYKEETEEDL…AELRKAMPFV (146 aa)) is the KARI C-terminal knotted domain. Residues Asp-191, Glu-195, Glu-227, and Glu-231 each coordinate Mg(2+). A substrate-binding site is contributed by Ser-252.

It belongs to the ketol-acid reductoisomerase family. Mg(2+) is required as a cofactor.

The catalysed reaction is (2R)-2,3-dihydroxy-3-methylbutanoate + NADP(+) = (2S)-2-acetolactate + NADPH + H(+). It carries out the reaction (2R,3R)-2,3-dihydroxy-3-methylpentanoate + NADP(+) = (S)-2-ethyl-2-hydroxy-3-oxobutanoate + NADPH + H(+). The protein operates within amino-acid biosynthesis; L-isoleucine biosynthesis; L-isoleucine from 2-oxobutanoate: step 2/4. It participates in amino-acid biosynthesis; L-valine biosynthesis; L-valine from pyruvate: step 2/4. Its function is as follows. Involved in the biosynthesis of branched-chain amino acids (BCAA). Catalyzes an alkyl-migration followed by a ketol-acid reduction of (S)-2-acetolactate (S2AL) to yield (R)-2,3-dihydroxy-isovalerate. In the isomerase reaction, S2AL is rearranged via a Mg-dependent methyl migration to produce 3-hydroxy-3-methyl-2-ketobutyrate (HMKB). In the reductase reaction, this 2-ketoacid undergoes a metal-dependent reduction by NADPH to yield (R)-2,3-dihydroxy-isovalerate. This chain is Ketol-acid reductoisomerase (NADP(+)), found in Streptococcus pneumoniae (strain JJA).